Here is a 173-residue protein sequence, read N- to C-terminus: Streptothricin acetyltransferase A (173 aa).

Residues 21–173 (VVFGRMIPAF…EIAIFWYYKF (153 aa)) enclose the N-acetyltransferase domain.

The protein belongs to the acetyltransferase family. GNAT subfamily. In terms of assembly, homodimer.

The enzyme catalyses streptothricin D + acetyl-CoA = N(beta)-acetylstreptothricin D + CoA + H(+). The catalysed reaction is streptothricin F + acetyl-CoA = N(beta)-acetylstreptothricin F + CoA + H(+). Involved in resistance to streptothricin, a broad-spectrum antibiotic produced by streptomycetes. Detoxifies streptothricin via acetylation of the beta amino group of the first beta-lysyl moiety of streptothricin. The polypeptide is Streptothricin acetyltransferase A (Bacillus subtilis (strain 168)).